The sequence spans 163 residues: D-aminoacyl-tRNA deacylase (163 aa).

The Gly-cisPro motif, important for rejection of L-amino acids motif lies at 141–142 (GP).

It belongs to the DTD family. Homodimer.

It localises to the cytoplasm. The catalysed reaction is glycyl-tRNA(Ala) + H2O = tRNA(Ala) + glycine + H(+). It catalyses the reaction a D-aminoacyl-tRNA + H2O = a tRNA + a D-alpha-amino acid + H(+). An aminoacyl-tRNA editing enzyme that deacylates mischarged D-aminoacyl-tRNAs. Also deacylates mischarged glycyl-tRNA(Ala), protecting cells against glycine mischarging by AlaRS. Acts via tRNA-based rather than protein-based catalysis; rejects L-amino acids rather than detecting D-amino acids in the active site. By recycling D-aminoacyl-tRNA to D-amino acids and free tRNA molecules, this enzyme counteracts the toxicity associated with the formation of D-aminoacyl-tRNA entities in vivo and helps enforce protein L-homochirality. The protein is D-aminoacyl-tRNA deacylase of Neisseria gonorrhoeae (strain ATCC 700825 / FA 1090).